The primary structure comprises 505 residues: Lysine--tRNA ligase (505 aa).

Residues glutamate 415 and glutamate 422 each coordinate Mg(2+).

The protein belongs to the class-II aminoacyl-tRNA synthetase family. In terms of assembly, homodimer. It depends on Mg(2+) as a cofactor.

Its subcellular location is the cytoplasm. The catalysed reaction is tRNA(Lys) + L-lysine + ATP = L-lysyl-tRNA(Lys) + AMP + diphosphate. This is Lysine--tRNA ligase from Pectobacterium atrosepticum (strain SCRI 1043 / ATCC BAA-672) (Erwinia carotovora subsp. atroseptica).